A 662-amino-acid chain; its full sequence is Probable quinol oxidase subunit 1 (662 aa).

The next 2 helical transmembrane spans lie at 14-34 and 56-76; these read WMII…IAVI and IGIM…IDAL. Residue His102 coordinates Fe(II)-heme a. 8 consecutive transmembrane segments (helical) span residues 103–123, 140–160, 187–207, 228–248, 273–293, 311–331, 336–356, and 376–396; these read GVIM…NVVI, VSFW…IVGG, IAIQ…FVTI, FITT…LALM, FFWV…FGMY, MIWA…HHFF, GALI…PTGV, and MLFS…GVML. 4 residues coordinate Cu cation: His279, Tyr283, His328, and His329. A cross-link (1'-histidyl-3'-tyrosine (His-Tyr)) is located at residues 279 to 283; the sequence is HPEVY. His414 lines the heme a3 pocket. A run of 5 helical transmembrane segments spans residues 415–435, 451–471, 492–512, 587–604, and 608–627; these read FHYT…IFWY, CFWF…ILGL, FIST…VASI, PVGF…FFLI, and IVPA…WRSF. His416 is a Fe(II)-heme a binding site.

This sequence belongs to the heme-copper respiratory oxidase family. Requires Cu cation as cofactor. It depends on ferriheme a as a cofactor. The cofactor is Heme A3..

It is found in the cell membrane. The enzyme catalyses 2 a quinol + O2 = 2 a quinone + 2 H2O. Its pathway is energy metabolism; oxidative phosphorylation. Its function is as follows. Catalyzes quinol oxidation with the concomitant reduction of oxygen to water. The sequence is that of Probable quinol oxidase subunit 1 (qoxB) from Staphylococcus epidermidis (strain ATCC 35984 / DSM 28319 / BCRC 17069 / CCUG 31568 / BM 3577 / RP62A).